The following is a 638-amino-acid chain: 1-deoxy-D-xylulose-5-phosphate synthase (638 aa).

Thiamine diphosphate contacts are provided by residues H77 and 118–120 (AHA). Mg(2+) is bound at residue D149. Residues 150 to 151 (GS), N178, Y287, and E369 each bind thiamine diphosphate. Mg(2+) is bound at residue N178.

The protein belongs to the transketolase family. DXPS subfamily. In terms of assembly, homodimer. Mg(2+) is required as a cofactor. The cofactor is thiamine diphosphate.

It carries out the reaction D-glyceraldehyde 3-phosphate + pyruvate + H(+) = 1-deoxy-D-xylulose 5-phosphate + CO2. The protein operates within metabolic intermediate biosynthesis; 1-deoxy-D-xylulose 5-phosphate biosynthesis; 1-deoxy-D-xylulose 5-phosphate from D-glyceraldehyde 3-phosphate and pyruvate: step 1/1. Its function is as follows. Catalyzes the acyloin condensation reaction between C atoms 2 and 3 of pyruvate and glyceraldehyde 3-phosphate to yield 1-deoxy-D-xylulose-5-phosphate (DXP). This Phenylobacterium zucineum (strain HLK1) protein is 1-deoxy-D-xylulose-5-phosphate synthase.